The chain runs to 133 residues: MSAPLENLETQLEMFIENVRQIRIIVSDFQPQGQNVLNQKINSLVTGLQEIDKLRSQVQDVYVPFEVFFDYIDQDKNPQLYTKDCVEKALAKNEEVKGKIEGLKKFKTNLLLELYKTFPNEMNNYRAYRKDSM.

It belongs to the Mediator complex subunit 10 family. As to quaternary structure, component of the Mediator complex. Interacts with MED4 and MED21.

The protein localises to the nucleus. In terms of biological role, component of the Mediator complex, a coactivator involved in the regulated transcription of nearly all RNA polymerase II-dependent genes. Mediator functions as a bridge to convey information from gene-specific regulatory proteins to the basal RNA polymerase II transcription machinery. Mediator is recruited to promoters by direct interactions with regulatory proteins and serves as a scaffold for the assembly of a functional preinitiation complex with RNA polymerase II and the general transcription factors. Required for activated transcription of the MtnA, MtnB and MtnD genes. The polypeptide is Mediator of RNA polymerase II transcription subunit 10 (MED10) (Drosophila melanogaster (Fruit fly)).